The following is a 95-amino-acid chain: MALEFKDKWLEQFYEDDKRHRLIPSSIENALFRKLEILDAAQAESDLRIPPGNRFEHLEGNLKGWCSIRVNKQYRLIFQWVDGVALNTYLDPHKY.

Its function is as follows. Toxic component of a type II toxin-antitoxin (TA) system. Inhibits translation by cleavage of mRNA. This chain is Toxin HigB-1 (higB-1), found in Vibrio cholerae serotype O1 (strain ATCC 39315 / El Tor Inaba N16961).